Reading from the N-terminus, the 223-residue chain is Putative N-acetylmannosamine-6-phosphate 2-epimerase (223 aa).

It belongs to the NanE family.

It carries out the reaction an N-acyl-D-glucosamine 6-phosphate = an N-acyl-D-mannosamine 6-phosphate. It participates in amino-sugar metabolism; N-acetylneuraminate degradation; D-fructose 6-phosphate from N-acetylneuraminate: step 3/5. Converts N-acetylmannosamine-6-phosphate (ManNAc-6-P) to N-acetylglucosamine-6-phosphate (GlcNAc-6-P). This chain is Putative N-acetylmannosamine-6-phosphate 2-epimerase, found in Staphylococcus haemolyticus (strain JCSC1435).